Here is a 263-residue protein sequence, read N- to C-terminus: Phosphatidylglycerol--prolipoprotein diacylglyceryl transferase (263 aa).

4 helical membrane-spanning segments follow: residues V10–F30, M56–Y76, I91–L111, and G117–F137. Residue R139 coordinates a 1,2-diacyl-sn-glycero-3-phospho-(1'-sn-glycerol). 3 helical membrane-spanning segments follow: residues P171–F191, G199–V219, and F231–L251.

The protein belongs to the Lgt family.

It localises to the cell inner membrane. It catalyses the reaction L-cysteinyl-[prolipoprotein] + a 1,2-diacyl-sn-glycero-3-phospho-(1'-sn-glycerol) = an S-1,2-diacyl-sn-glyceryl-L-cysteinyl-[prolipoprotein] + sn-glycerol 1-phosphate + H(+). The protein operates within protein modification; lipoprotein biosynthesis (diacylglyceryl transfer). In terms of biological role, catalyzes the transfer of the diacylglyceryl group from phosphatidylglycerol to the sulfhydryl group of the N-terminal cysteine of a prolipoprotein, the first step in the formation of mature lipoproteins. This chain is Phosphatidylglycerol--prolipoprotein diacylglyceryl transferase, found in Nitratidesulfovibrio vulgaris (strain DP4) (Desulfovibrio vulgaris).